A 488-amino-acid chain; its full sequence is 3-octaprenyl-4-hydroxybenzoate carboxy-lyase (488 aa).

Mn(2+) is bound at residue N172. Residues 175-177 (IYR), 189-191 (RWL), and 194-195 (RG) each bind prenylated FMN. E238 is a binding site for Mn(2+). The active-site Proton donor is D287.

This sequence belongs to the UbiD family. In terms of assembly, homohexamer. The cofactor is prenylated FMN. It depends on Mn(2+) as a cofactor.

The protein localises to the cell membrane. It catalyses the reaction a 4-hydroxy-3-(all-trans-polyprenyl)benzoate + H(+) = a 2-(all-trans-polyprenyl)phenol + CO2. Its pathway is cofactor biosynthesis; ubiquinone biosynthesis. Catalyzes the decarboxylation of 3-octaprenyl-4-hydroxy benzoate to 2-octaprenylphenol, an intermediate step in ubiquinone biosynthesis. The polypeptide is 3-octaprenyl-4-hydroxybenzoate carboxy-lyase (Pseudomonas syringae pv. syringae (strain B728a)).